A 684-amino-acid chain; its full sequence is MMRSLKSRKLVFILAMLFLINAIVSLKFITYSSANQLASKSKYIEYNFENKSVSPLAKYPSNVVLKVTNSTCAEGTFSVLVAGRKNANDGVIVDITKFLDFSREYEVSFYVLQTTKKLQRISVTLEILDSNDKNQVIAAEKVLLPNIWTKVSAKVQASNYKKAKRINLIVNMPTSKSDSFYIDLFTIKDLENAYVLKQENFENKNTGGFLPEDKNCKITLAKDRAYSSAYSLKVQPSQKTKNGKILFPIKGLLQKGGTYDFSLLVYQDSSKPVNFSAGIKLNDGKSTKEIVLAKQNVAPKKWTQLFATLDLDTRFSAKDVSFFVKPAAAISYYLDLYSISDENWGQPVPDYNLPSLCEKYKNYFKIGVAVPYRALTNPVDVEVIKRHFNSITPENEMKPESLQPYEGGFSFSIADEYVDFCKKDNISLRGHTLVWHQQTPSWFFTNPETGEKLTNSEKDKEILLDRLKKHIQTVVGRYKGKVYAWDVVNEAIDENQPDGYRRSDWYNILGPEYIEKAFIWAHEADPKAKLFYNDYSTEDPYKREFIYKLIKNLKAKGVPVHGVGLQCHISLDWPDVSEIEETVKLFSRIPGLEIHFTEIDISIAKNMTDDDAYNRYLLVQQAQKLKAIFDVLKKYRNVVTSVTFWGLKDDYSWLRGDMPLLSDKDYQPKFAFWSLIDPSVVPKE.

The first 34 residues, 1–34, serve as a signal peptide directing secretion; sequence MMRSLKSRKLVFILAMLFLINAIVSLKFITYSSA. 2 CBM-cenC domains span residues 40–190 and 193–342; these read KSKY…IKDL and AYVL…ISDE. In terms of domain architecture, GH10 spans 350 to 678; that stretch reads DYNLPSLCEK…KFAFWSLIDP (329 aa). The active-site Proton donor is the glutamate 490. Glutamate 598 (nucleophile) is an active-site residue.

Belongs to the glycosyl hydrolase 10 (cellulase F) family.

It carries out the reaction Endohydrolysis of (1-&gt;4)-beta-D-xylosidic linkages in xylans.. It participates in glycan degradation; xylan degradation. The polypeptide is Endo-1,4-beta-xylanase A (xynA) (Caldicellulosiruptor sp. (strain Rt8B.4)).